The primary structure comprises 793 residues: Calcium permeable stress-gated cation channel 1 (793 aa).

Topologically, residues 1 to 21 are lumenal; sequence MAFNGYGIFDSDPRKNPSSDL. The chain crosses the membrane as a helical span at residues 22–42; the sequence is RTQFWLAFLLGASACVFFCFF. The Cytoplasmic segment spans residues 43 to 95; the sequence is RKRWKVLYAPRTTIEGLNLPTLSSSYYKWLMDLVNIPDDVVQNCAGLDGYVFL. Residues 96 to 116 traverse the membrane as a helical segment; that stretch reads LFFKMGIKFLSFASLLGVLII. The Lumenal segment spans residues 117 to 192; the sequence is MPVNKHFRGD…IPGLPQPGDG (76 aa). A helical transmembrane segment spans residues 193-213; sequence FLYLYVLFTYFISIFLLYVLF. At 214 to 444 the chain is on the cytoplasmic side; it reads SSTKSIADIR…HKFFQGWFIT (231 aa). The helical transmembrane segment at 445-465 threads the bilayer; it reads LVTFMIILLWTVPVGAIAVFI. Over 466–493 the chain is Lumenal; that stretch reads NLDTIRRLWPELGRMIEDLPFLNSLLRT. The helical transmembrane segment at 494-514 threads the bilayer; sequence FLPTLVYSLFISISPFLFRWL. Residues 515-534 lie on the Cytoplasmic side of the membrane; the sequence is SSMQGLSSRAEEEIYAVGKN. Residues 535–555 form a helical membrane-spanning segment; sequence YAYLFVNFFLVYVIAGSTSIW. Residues 556 to 577 lie on the Lumenal side of the membrane; that stretch reads ELAKDTTSFAHFLANRLPHQAQ. A helical membrane pass occupies residues 578-598; it reads FFIDLIVLQGIGMFPLKLIQL. Topologically, residues 599 to 646 are cytoplasmic; it reads GKLSSYFVRRSFVPYSIASKKFETPDSFSVGIFLPQPMFIMLICLCYS. The helical transmembrane segment at 647-667 threads the bilayer; the sequence is IISPLILVFGLIYFIIGFLVY. Over 668 to 687 the chain is Lumenal; sequence KYELIYQMEHPQHSTGELWS. The helical transmembrane segment at 688–708 threads the bilayer; it reads TIFLRMIFGCVIMQLTMMGLM. Topologically, residues 709 to 713 are cytoplasmic; that stretch reads SLRKA. The chain crosses the membrane as a helical span at residues 714–734; sequence YWLSTVIFPLLCFTVISAYNF. Topologically, residues 735–793 are lumenal; that stretch reads STMIRSSMQFVSLYYIRTHQSNTLSSESESRNSESSGSYVHPGFDLSNEELPLIDLNTA. The interval 759 to 778 is disordered; that stretch reads SSESESRNSESSGSYVHPGF.

Belongs to the CSC1 (TC 1.A.17) family.

Its subcellular location is the vacuole membrane. Its function is as follows. Acts as an osmosensitive calcium-permeable cation channel. This chain is Calcium permeable stress-gated cation channel 1, found in Schizosaccharomyces pombe (strain 972 / ATCC 24843) (Fission yeast).